A 472-amino-acid polypeptide reads, in one-letter code: Glutamate--tRNA ligase (472 aa).

The 'HIGH' region signature appears at 9-19 (PSPTGYLHVGG). 4 residues coordinate Zn(2+): Cys-98, Cys-100, Cys-125, and His-127. Positions 237–241 (KLSKR) match the 'KMSKS' region motif. Lys-240 lines the ATP pocket.

The protein belongs to the class-I aminoacyl-tRNA synthetase family. Glutamate--tRNA ligase type 1 subfamily. Monomer. Requires Zn(2+) as cofactor.

It localises to the cytoplasm. The enzyme catalyses tRNA(Glu) + L-glutamate + ATP = L-glutamyl-tRNA(Glu) + AMP + diphosphate. Its function is as follows. Catalyzes the attachment of glutamate to tRNA(Glu) in a two-step reaction: glutamate is first activated by ATP to form Glu-AMP and then transferred to the acceptor end of tRNA(Glu). This chain is Glutamate--tRNA ligase, found in Klebsiella pneumoniae (strain 342).